The primary structure comprises 83 residues: Small ribosomal subunit protein uS17 (83 aa).

The protein belongs to the universal ribosomal protein uS17 family. Part of the 30S ribosomal subunit.

One of the primary rRNA binding proteins, it binds specifically to the 5'-end of 16S ribosomal RNA. The chain is Small ribosomal subunit protein uS17 from Francisella tularensis subsp. tularensis (strain FSC 198).